We begin with the raw amino-acid sequence, 411 residues long: Arginase (411 aa).

A disordered region spans residues N83–N106. 4 residues coordinate Mn(2+): H193, D216, H218, and D220. Residues N222, S229, and D274 each coordinate L-arginine. The Mn(2+) site is built by D323 and D325.

It belongs to the arginase family. Homotrimer; oligomerization is dependent on Mn(2+) binding. It depends on Mn(2+) as a cofactor.

It catalyses the reaction L-arginine + H2O = urea + L-ornithine. It participates in nitrogen metabolism; urea cycle; L-ornithine and urea from L-arginine: step 1/1. With respect to regulation, feedback inhibition by product L-ornithine,. Inhibited by 2(S)-amino-6-boronohexanoic acid (ABH); however, with less efficiency than human ARG1. Catalyzes the hydrolysis of L-arginine into urea and L-ornithine, which is a precursor for polyamine biosynthesis. May play a role in parasite intra-hepatic development during the host liver stage. The polypeptide is Arginase (Plasmodium falciparum (isolate 3D7)).